A 320-amino-acid chain; its full sequence is Ferrochelatase (320 aa).

Residues His-194 and Glu-275 each coordinate Fe cation.

It belongs to the ferrochelatase family. As to quaternary structure, monomer.

The protein resides in the cytoplasm. The enzyme catalyses heme b + 2 H(+) = protoporphyrin IX + Fe(2+). It participates in porphyrin-containing compound metabolism; protoheme biosynthesis; protoheme from protoporphyrin-IX: step 1/1. Its function is as follows. Catalyzes the ferrous insertion into protoporphyrin IX. In Escherichia coli O127:H6 (strain E2348/69 / EPEC), this protein is Ferrochelatase.